The chain runs to 238 residues: Large ribosomal subunit protein uL5c (238 aa).

Belongs to the universal ribosomal protein uL5 family. In terms of assembly, part of the 50S ribosomal subunit; contacts the 5S rRNA.

The protein resides in the plastid. The protein localises to the chloroplast. Functionally, binds 5S rRNA, forms part of the central protuberance of the 50S subunit. The protein is Large ribosomal subunit protein uL5c (rpl5) of Trieres chinensis (Marine centric diatom).